The chain runs to 161 residues: Effector CFEM5 (161 aa).

The signal sequence occupies residues 1-23 (MFSLTKSVLFTSIVAIAAQATTA). The CFEM domain occupies 24–126 (VSSPTQTSLP…KVLDAVVASA (103 aa)). Intrachain disulfides connect C46/C78, C56/C63, and C65/C100. D60 contacts heme.

Belongs to the RBT5 family. In terms of assembly, interacts with Z.mays LRR5; the interaction is direct. Interacts with Z.mays WAK17 isoform 2; the interaction is direct.

The protein localises to the membrane. It localises to the secreted. Functionally, suppresses host programmed cell death during infection by binding to Z.mays WAK17 isoform 2 and Z.mays LRR5, to prevent activation of Z.mays WAK17 isoform 1 and the downstream hypersensitive response. This chain is Effector CFEM5, found in Gibberella zeae (strain ATCC MYA-4620 / CBS 123657 / FGSC 9075 / NRRL 31084 / PH-1) (Wheat head blight fungus).